A 301-amino-acid chain; its full sequence is MSELISVVVPIYNTGKYLVECVEHILKQTYQNIEIILVDDGSTDNSGEICDAFMMQDNRVRVLHQENKGGAAQAKNMGISVAKGEYITIVDSDDIVKENMIETLYQQVQEKDADVVIGNYYNYDESDGNFYFYVTGQDFCVEELAIQEIMNRQAGDWKFNSSAFILPTFKLIKKELFNEVHFSNGRRFDDEATMHRFYLLASKIVFINDNLYLYRRRSGSIMRTEFDLSWARDIVEVFSKKISDCVLAGLDVSVLRIRFVNLLKDYKQTLEYHQLTDTEEYKDICFRLKLFFDAEQRNGKS.

The protein belongs to the glycosyltransferase 2 family.

It functions in the pathway protein modification; protein glycosylation. Involved in the polymorphic O-glycosylation of the serine-rich repeat protein PsrP. Catalyzes the third step in glycosylation PsrP in this bacteria. Transfers glucose from UDP-glucose to the terminal glucose moiety of already-glycosylated PsrP (using truncated substrates with PsrP SSR1-GlcNAc-Glc). Has a marked preference for PsrP substrate that has already been modified by GlcNAc and glucose. In vitro has hydrolytic activity against UDP-glucose and to a lesser extent against UDP-galactose. In terms of biological role, also catalyzes the fourth step in glycosylation of the serine-rich repeat protein PsrP in this bacteria. Can transfer the sugar from UDP-glucose (and much less well from UDP-galactose) to the terminal sugar moiety of PsrP-GlcNAc-Glc-Gal or of PsrP-GlcNAc-Glc-Glc. In Streptococcus pneumoniae serotype 4 (strain ATCC BAA-334 / TIGR4), this protein is Glycosyltransferase GlyG.